Reading from the N-terminus, the 807-residue chain is Oxysterol-binding protein 1 (807 aa).

N-acetylalanine is present on A2. Residues 61–86 (GAGGVAAAGPAPAPPTGGSGGSGAGG) form a disordered region. Residues 77–86 (GGSGGSGAGG) are compositionally biased toward gly residues. The PH domain occupies 88 to 181 (GSAREGWLFK…WVTALELAKA (94 aa)). 117-122 (LSYYRS) provides a ligand contact to a 1,2-diacyl-sn-glycero-3-phospho-(1D-myo-inositol 4-phosphate). Residues S190, S193, S198, S238, and S240 each carry the phosphoserine modification. Residues 291-326 (QKSLQYERDQRIRLEETLEQLAKQHNHLERAFRGAT) are a coiled coil. Q314 serves as a coordination point for 20-hydroxycholesterol. Q314 lines the 25-hydroxycholesterol pocket. A 7beta-hydroxycholesterol-binding site is contributed by Q314. Q314 contacts cholesterol. Q314 lines the ergosterol pocket. Residues 329-353 (PANTPGNVGSGKDQCCSGKGDMSDE) form a disordered region. Residues S338, S345, and S351 each carry the phosphoserine modification. An FFAT motif is present at residues 358–364 (EFFDAPE). T377 carries the post-translational modification Phosphothreonine. Residues S379, S382, S385, S386, and S389 each carry the phosphoserine modification. Residues 493–496 (KPFN) and 522–523 (HH) contribute to the a 1,2-diacyl-sn-glycero-3-phospho-(1D-myo-inositol 4-phosphate) site. The interval 710-759 (TAPTDSRLRPDQRLMENGRWDEANAEKQRLEEKQRLSRKKREAEAMKATE) is disordered. Residues 715 to 759 (SRLRPDQRLMENGRWDEANAEKQRLEEKQRLSRKKREAEAMKATE) show a composition bias toward basic and acidic residues. Residues 730-760 (DEANAEKQRLEEKQRLSRKKREAEAMKATED) adopt a coiled-coil conformation.

The protein belongs to the OSBP family. As to quaternary structure, homodimer or homotrimer. Interacts (via FFAT motif) with VAPA. Interacts (via C-terminus) with RELCH (via the third HEAT repeat). Found in a complex composed of RELCH, OSBP1 and RAB11A. As to expression, widely expressed.

It is found in the cytoplasm. Its subcellular location is the cytosol. The protein resides in the perinuclear region. It localises to the golgi apparatus membrane. The protein localises to the endoplasmic reticulum membrane. It is found in the golgi apparatus. Its subcellular location is the trans-Golgi network. In terms of biological role, lipid transporter involved in lipid countertransport between the Golgi complex and membranes of the endoplasmic reticulum: specifically exchanges sterol with phosphatidylinositol 4-phosphate (PI4P), delivering sterol to the Golgi in exchange for PI4P, which is degraded by the SAC1/SACM1L phosphatase in the endoplasmic reticulum. Binds cholesterol and a range of oxysterols including 25-hydroxycholesterol. Cholesterol binding promotes the formation of a complex with PP2A and a tyrosine phosphatase which dephosphorylates ERK1/2, whereas 25-hydroxycholesterol causes its disassembly. Regulates cholesterol efflux by decreasing ABCA1 stability. The chain is Oxysterol-binding protein 1 from Homo sapiens (Human).